The sequence spans 1918 residues: Diacylglycerol kinase eta (1918 aa).

Residues 1 to 10 (MAHLKLDTLH) show a composition bias toward basic and acidic residues. The interval 1–37 (MAHLKLDTLHVQRSPRGSRRSSPSSGRSSACSSGSIS) is disordered. Low complexity predominate over residues 20–37 (RSSPSSGRSSACSSGSIS). The 94-residue stretch at 82-175 (AIIKEGFLLK…WLGGLKTATA (94 aa)) folds into the PH domain. 2 Phorbol-ester/DAG-type zinc fingers span residues 195–245 (HHHW…IANC) and 268–319 (PHQW…AVAC). The DAGKc domain occupies 350-486 (GNFSPLLVFV…DRWSIMVFEK (137 aa)). 4 disordered regions span residues 783 to 805 (GANI…NTPT), 1017 to 1067 (TTLC…DDNP), 1177 to 1212 (PNTI…GDSI), and 1380 to 1399 (ERDK…TEEA). Positions 1177–1189 (PNTILTTSTSPTK) are enriched in polar residues. Positions 1855–1918 (WSVNEVVTWL…LQAIKDLSEN (64 aa)) constitute an SAM domain.

The protein belongs to the eukaryotic diacylglycerol kinase family.

The protein localises to the cytoplasm. The catalysed reaction is a 1,2-diacyl-sn-glycerol + ATP = a 1,2-diacyl-sn-glycero-3-phosphate + ADP + H(+). Functionally, phosphorylates diacylglycerol (DAG) to generate phosphatidic acid (PA). In Drosophila erecta (Fruit fly), this protein is Diacylglycerol kinase eta.